The following is a 267-amino-acid chain: FCS-Like Zinc finger 8 (267 aa).

2 disordered regions span residues 1–29 and 124–156; these read MLKKRSRSKQALMAETNQSQNQKQSKTTP and DSPISSSDFGIKTRNSQPETKKPGSESGLGSPR. Polar residues-rich tracts occupy residues 15 to 28 and 126 to 141; these read ETNQSQNQKQSKTT and PISSSDFGIKTRNSQP. An FLZ-type zinc finger spans residues 221–265; the sequence is SFLSCCCNCKKSLGPRDDIFMYRGDRAFCSSECRSIEMMMSEEND.

The protein belongs to the FLZ family. In terms of assembly, interacts with KIN10 and KIN11 via its FLZ-type zinc finger domain. Interacts with KINB1, KINB2, KINB3 and SNF4 via its N-terminal part. Interacts with HB21/ZHD3.

Its function is as follows. May act as an adapter to facilitate the interaction of SnRK1 complex with effector proteins, conferring tissue- and stimulus-type specific differences in the SnRK1 regulation pathway. The polypeptide is FCS-Like Zinc finger 8 (Arabidopsis thaliana (Mouse-ear cress)).